The primary structure comprises 314 residues: tRNA dimethylallyltransferase (314 aa).

Position 12-19 (12-19) interacts with ATP; the sequence is GPTASGKT. 14–19 contacts substrate; it reads TASGKT. Interaction with substrate tRNA stretches follow at residues 37–40, 161–165, and 244–249; these read DSAL, QRIQR, and RCVGYR.

The protein belongs to the IPP transferase family. As to quaternary structure, monomer. Mg(2+) serves as cofactor.

It catalyses the reaction adenosine(37) in tRNA + dimethylallyl diphosphate = N(6)-dimethylallyladenosine(37) in tRNA + diphosphate. Functionally, catalyzes the transfer of a dimethylallyl group onto the adenine at position 37 in tRNAs that read codons beginning with uridine, leading to the formation of N6-(dimethylallyl)adenosine (i(6)A). This is tRNA dimethylallyltransferase from Janthinobacterium sp. (strain Marseille) (Minibacterium massiliensis).